We begin with the raw amino-acid sequence, 339 residues long: Transmembrane protein 120B (339 aa).

Residues 1-77 (MSGQLERCER…ASREEAELVQ (77 aa)) are a coiled coil. 6 helical membrane passes run 102 to 124 (GLYL…AKFA), 132 to 152 (FKLY…FFLH), 159 to 179 (VFNF…SILI), 187 to 207 (GWWV…LTWP), 270 to 290 (FLLP…VTLF), and 302 to 322 (QVFV…LTTL).

It belongs to the TMEM120 family. As to quaternary structure, heterooligomer with TMEM120A.

It localises to the nucleus inner membrane. Functionally, necessary for efficient adipogenesis. Does not show ion channel activity. This chain is Transmembrane protein 120B (TMEM120B), found in Bos taurus (Bovine).